Here is a 326-residue protein sequence, read N- to C-terminus: MLLSLAIDTAFKGYLSLQNTIENDFELNGIAPLESATPTQISYIDQDKYLSNLTDSQAGAVFIRPHLLDKVPSHIQPLVVENPHLAFALLSQLFAAPCFTLTTQNPRTNNIQIGANVVIGDNVSIGEHSIIMPNVVIGDNVSIGEHCKIYPNVVIYRDSIIGNRVNIHAGSIIGCDGFGYAHTAEGKHIKIEHNGRVVIEDDVEIGANNTIDRAVFGQTLIKQGAKIDNLVQIGHNCVVGEHTLLVSQVGLAGSTTTGRNVIMGGQAGTGGHIHIGDFVQVAGRGAVGKNLPPHTKWGGHPLMELNEWMKFYVSLRRLIKKDSKKL.

Histidine 235 serves as the catalytic Proton acceptor.

This sequence belongs to the transferase hexapeptide repeat family. LpxD subfamily. In terms of assembly, homotrimer.

It carries out the reaction a UDP-3-O-[(3R)-3-hydroxyacyl]-alpha-D-glucosamine + a (3R)-hydroxyacyl-[ACP] = a UDP-2-N,3-O-bis[(3R)-3-hydroxyacyl]-alpha-D-glucosamine + holo-[ACP] + H(+). The protein operates within bacterial outer membrane biogenesis; LPS lipid A biosynthesis. Its function is as follows. Catalyzes the N-acylation of UDP-3-O-acylglucosamine using 3-hydroxyacyl-ACP as the acyl donor. Is involved in the biosynthesis of lipid A, a phosphorylated glycolipid that anchors the lipopolysaccharide to the outer membrane of the cell. The polypeptide is UDP-3-O-acylglucosamine N-acyltransferase (Helicobacter hepaticus (strain ATCC 51449 / 3B1)).